Consider the following 280-residue polypeptide: Protease HtpX (280 aa).

The next 2 membrane-spanning stretches (helical) occupy residues T7–G26 and G30–S49. Residue H129 coordinates Zn(2+). The active site involves E130. A Zn(2+)-binding site is contributed by H133. Helical transmembrane passes span A146–G166 and V178–I198. Zn(2+) is bound at residue E203.

This sequence belongs to the peptidase M48B family. It depends on Zn(2+) as a cofactor.

The protein resides in the cell inner membrane. This Legionella pneumophila (strain Lens) protein is Protease HtpX.